A 101-amino-acid chain; its full sequence is Small ribosomal subunit protein uS14 (101 aa).

Belongs to the universal ribosomal protein uS14 family. Part of the 30S ribosomal subunit. Contacts proteins S3 and S10.

Functionally, binds 16S rRNA, required for the assembly of 30S particles and may also be responsible for determining the conformation of the 16S rRNA at the A site. The sequence is that of Small ribosomal subunit protein uS14 from Shewanella amazonensis (strain ATCC BAA-1098 / SB2B).